Reading from the N-terminus, the 346-residue chain is Phosphate acyltransferase (346 aa).

It belongs to the PlsX family. As to quaternary structure, homodimer. Probably interacts with PlsY.

It is found in the cytoplasm. The enzyme catalyses a fatty acyl-[ACP] + phosphate = an acyl phosphate + holo-[ACP]. It functions in the pathway lipid metabolism; phospholipid metabolism. Catalyzes the reversible formation of acyl-phosphate (acyl-PO(4)) from acyl-[acyl-carrier-protein] (acyl-ACP). This enzyme utilizes acyl-ACP as fatty acyl donor, but not acyl-CoA. The protein is Phosphate acyltransferase of Pelobacter propionicus (strain DSM 2379 / NBRC 103807 / OttBd1).